We begin with the raw amino-acid sequence, 288 residues long: Syntaxin-1A (288 aa).

Residues 1 to 13 (MKDRTQELRTAKD) show a composition bias toward basic and acidic residues. The segment at 1 to 20 (MKDRTQELRTAKDSDDDDDV) is disordered. Over 1–265 (MKDRTQELRT…KYQSKARRKK (265 aa)) the chain is Cytoplasmic. A phosphoserine mark is found at serine 14, serine 64, and serine 95. Positions 68–109 (DEKTKEELEELMSDIKKTANKVRSKLKSIEQSIEQEEGLNRS) form a coiled coil. Residue serine 188 is modified to Phosphoserine; by DAPK1. A t-SNARE coiled-coil homology domain is found at 192-254 (LSEIETRHSE…ERAVSDTKKA (63 aa)). Glycyl lysine isopeptide (Lys-Gly) (interchain with G-Cter in SUMO) cross-links involve residues lysine 252, lysine 253, and lysine 256. Residues 266–286 (IMIIICCVILGIIIASTIGGI) traverse the membrane as a helical; Anchor for type IV membrane protein segment. Residues 287-288 (FG) are Extracellular-facing.

It belongs to the syntaxin family. In terms of assembly, part of the SNARE core complex containing SNAP25, VAMP2 and STX1A; this complex constitutes the basic catalytic machinery of the complex neurotransmitter release apparatus. The SNARE complex interacts with CPLX1. Interacts with STXBP1. The interaction with STXBP1 promotes assembly of the SNARE complex. Interacts (via C-terminus) with KCNB1 (via C-terminus); the interaction increases in a calcium-dependent manner and induces a pore-independent enhancement of exocytosis in neuroendocrine cells, chromaffin cells, pancreatic beta cells and from the soma of dorsal root ganglia (DRG) neurons. Interacts with SYTL4. Interacts with STXBP6. Interacts with PLCL1 (via C2 domain). Interacts with OTOF. Interacts with LGI3. Interacts (via the H3 domain) with SLC6A4 (via the N-terminus); this interaction regulates SLC4A6 channel conductance in thalamocortical neurons. Interacts with SYT6 and SYT8; the interaction is Ca(2+)-dependent. Interacts with VAMP8. Interacts with SNAP23. Interacts with VAPA and SYBU. Interacts with PRRT2. Interacts with SEPT8. Interacts with STXBP5L. Interacts with synaptotagmin-1/SYT1. Interacts with SEPTIN5; in the cerebellar cortex. Interacts with SEPTIN4; in the striatum. In terms of processing, phosphorylated by CK2. Phosphorylation at Ser-188 by DAPK1 significantly decreases its interaction with STXBP1. Phosphorylated by CK2. Phosphorylation at Ser-188 by DAPK1 significantly decreases its interaction with STXBP1. Post-translationally, sumoylated, sumoylation is required for regulation of synaptic vesicle endocytosis. Expressed in the striatum (at protein level). Expressed in the ileum.

It is found in the cytoplasmic vesicle. It localises to the secretory vesicle. The protein localises to the synaptic vesicle membrane. The protein resides in the synapse. Its subcellular location is the synaptosome. It is found in the cell membrane. In terms of biological role, plays an essential role in hormone and neurotransmitter calcium-dependent exocytosis and endocytosis. Part of the SNARE (Soluble NSF Attachment Receptor) complex composed of SNAP25, STX1A and VAMP2 which mediates the fusion of synaptic vesicles with the presynaptic plasma membrane. STX1A and SNAP25 are localized on the plasma membrane while VAMP2 resides in synaptic vesicles. The pairing of the three SNAREs from the N-terminal SNARE motifs to the C-terminal anchors leads to the formation of the SNARE complex, which brings membranes into close proximity and results in final fusion. Participates in the calcium-dependent regulation of acrosomal exocytosis in sperm. Also plays an important role in the exocytosis of hormones such as insulin or glucagon-like peptide 1 (GLP-1). The protein is Syntaxin-1A (Stx1a) of Mus musculus (Mouse).